The chain runs to 331 residues: Probable inactive O-methyltransferase 11 (331 aa).

Residues G179, D202, 224–226, D225, F226, and K239 contribute to the S-adenosyl-L-methionine site; that span reads GDF.

The protein belongs to the class I-like SAM-binding methyltransferase superfamily. Cation-independent O-methyltransferase family. COMT subfamily.

This is Probable inactive O-methyltransferase 11 (omt11) from Dictyostelium discoideum (Social amoeba).